The following is a 218-amino-acid chain: Small ribosomal subunit protein mS34 (218 aa).

The protein belongs to the mitochondrion-specific ribosomal protein mS34 family. Component of the mitochondrial ribosome small subunit (28S) which comprises a 12S rRNA and about 30 distinct proteins. As to expression, widely expressed (at protein liver).

Its subcellular location is the mitochondrion. In terms of biological role, required for mitochondrial translation, plays a role in maintaining the stability of the small ribosomal subunit and the 12S rRNA that are required for mitoribosome formation. The chain is Small ribosomal subunit protein mS34 (Mrps34) from Mus musculus (Mouse).